A 594-amino-acid polypeptide reads, in one-letter code: UvrABC system protein C (594 aa).

One can recognise a GIY-YIG domain in the interval 14 to 91 (DQPGCYLMKD…IKKHDPKYNI (78 aa)). Residues 196–231 (KEVRSELETKMYEASEKLEFERAKELRDQIAHIDAI) enclose the UVR domain.

This sequence belongs to the UvrC family. In terms of assembly, interacts with UvrB in an incision complex.

Its subcellular location is the cytoplasm. Its function is as follows. The UvrABC repair system catalyzes the recognition and processing of DNA lesions. UvrC both incises the 5' and 3' sides of the lesion. The N-terminal half is responsible for the 3' incision and the C-terminal half is responsible for the 5' incision. This Bacillus anthracis (strain A0248) protein is UvrABC system protein C.